Reading from the N-terminus, the 220-residue chain is Fructose-6-phosphate aldolase (220 aa).

The active-site Schiff-base intermediate with substrate is Lys85.

The protein belongs to the transaldolase family. Type 3A subfamily. In terms of assembly, homodecamer.

Its subcellular location is the cytoplasm. It catalyses the reaction beta-D-fructose 6-phosphate = dihydroxyacetone + D-glyceraldehyde 3-phosphate. In terms of biological role, catalyzes the reversible formation of fructose 6-phosphate from dihydroxyacetone and D-glyceraldehyde 3-phosphate via an aldolization reaction. The polypeptide is Fructose-6-phosphate aldolase (Klebsiella pneumoniae subsp. pneumoniae (strain ATCC 700721 / MGH 78578)).